The chain runs to 105 residues: uncharacterized protein (105 aa).

A helical membrane pass occupies residues 4 to 26; that stretch reads TQILLILFVGILVTTPHDIFIII.

It is found in the membrane. This is an uncharacterized protein from Rickettsia conorii (strain ATCC VR-613 / Malish 7).